The chain runs to 129 residues: Small ribosomal subunit protein uS9 (129 aa).

This sequence belongs to the universal ribosomal protein uS9 family.

The chain is Small ribosomal subunit protein uS9 from Wolinella succinogenes (strain ATCC 29543 / DSM 1740 / CCUG 13145 / JCM 31913 / LMG 7466 / NCTC 11488 / FDC 602W) (Vibrio succinogenes).